The sequence spans 151 residues: MNPLRRKRLLIILAILVGVGVAVGLALSALQQNINLFYTPTQIANGEAPQDTRIRAGGMVEAGSLKRSGDSLDVTFVVTDFNKSVTITYRGILPDLFREGQGIVALGKINADGVVVADEVLAKHDEKYMPPEVTKALKESGQSAPTPAKEG.

Over 1-8 the chain is Cytoplasmic; that stretch reads MNPLRRKR. Residues 9-29 traverse the membrane as a helical; Signal-anchor for type II membrane protein segment; the sequence is LLIILAILVGVGVAVGLALSA. Residues 30 to 151 are Periplasmic-facing; the sequence is LQQNINLFYT…QSAPTPAKEG (122 aa). Residues His124 and Tyr128 each coordinate heme.

The protein belongs to the CcmE/CycJ family.

It is found in the cell inner membrane. Heme chaperone required for the biogenesis of c-type cytochromes. Transiently binds heme delivered by CcmC and transfers the heme to apo-cytochromes in a process facilitated by CcmF and CcmH. In Pseudomonas fluorescens biotype C, this protein is Cytochrome c-type biogenesis protein CcmE.